Here is a 586-residue protein sequence, read N- to C-terminus: Phosphoenolpyruvate-protein phosphotransferase (586 aa).

Histidine 201 functions as the Tele-phosphohistidine intermediate in the catalytic mechanism. Phosphoenolpyruvate is bound by residues arginine 308 and arginine 345. 2 residues coordinate Mg(2+): glutamate 446 and aspartate 470. Phosphoenolpyruvate contacts are provided by residues 469–470 and arginine 480; that span reads ND. The Proton donor role is filled by cysteine 517.

This sequence belongs to the PEP-utilizing enzyme family. As to quaternary structure, homodimer. Mg(2+) serves as cofactor.

The protein localises to the cytoplasm. It carries out the reaction L-histidyl-[protein] + phosphoenolpyruvate = N(pros)-phospho-L-histidyl-[protein] + pyruvate. General (non sugar-specific) component of the phosphoenolpyruvate-dependent sugar phosphotransferase system (sugar PTS). This major carbohydrate active-transport system catalyzes the phosphorylation of incoming sugar substrates concomitantly with their translocation across the cell membrane. Enzyme I transfers the phosphoryl group from phosphoenolpyruvate (PEP) to the phosphoryl carrier protein (HPr). This Cupriavidus necator (strain ATCC 17699 / DSM 428 / KCTC 22496 / NCIMB 10442 / H16 / Stanier 337) (Ralstonia eutropha) protein is Phosphoenolpyruvate-protein phosphotransferase.